The following is a 567-amino-acid chain: Wee1-like protein kinase 2 (567 aa).

4 stretches are compositionally biased toward basic and acidic residues: residues 1 to 12 (MDDKDIDKELRQ), 25 to 35 (EGQKKVEESRE), 42 to 51 (EKGEVQDSEA), and 64 to 77 (HELD…KESP). The tract at residues 1 to 117 (MDDKDIDKEL…DSPSTPKTML (117 aa)) is disordered. Phosphoserine is present on S76. Residues 173–175 (KRK) carry the Nuclear localization signal motif. In terms of domain architecture, Protein kinase spans 212-486 (FLEVEKIGVG…AAALARNTVL (275 aa)). Residues 218–226 (IGVGEFGTV) and K241 each bind ATP. The short motif at 315–329 (KLKDILLQISLGLNY) is the Nuclear export signal element. Catalysis depends on D339, which acts as the Proton acceptor. Mg(2+) is bound by residues N344 and D380. A coiled-coil region spans residues 494-519 (EELQQQLNLEKFKTATLERELREAQQ). A disordered region spans residues 514–567 (LREAQQAQSPQGYTHHGDTGVSGTHTGSRSTKRLVGGKSARSSSFTSGEREPLH).

This sequence belongs to the protein kinase superfamily. Ser/Thr protein kinase family. WEE1 subfamily. In terms of processing, phosphorylated on serine residues. Phosphorylation leads to increase its activity. As to expression, expressed in oocytes (at protein level). May also be expressed in testis.

It is found in the nucleus. The enzyme catalyses L-tyrosyl-[protein] + ATP = O-phospho-L-tyrosyl-[protein] + ADP + H(+). Oocyte-specific protein tyrosine kinase that phosphorylates and inhibits CDK1/CDC2 and acts as a key regulator of meiosis during both prophase I and metaphase II. Required to maintain meiotic arrest in oocytes during the germinal vesicle (GV) stage, a long period of quiescence at dictyate prophase I, by phosphorylating CDK1 at 'Tyr-15', leading to inhibit CDK1 activity and prevent meiotic reentry. Also required for metaphase II exit during egg activation by phosphorylating CDK1 at 'Tyr-15', to ensure exit from meiosis in oocytes and promote pronuclear formation. In Homo sapiens (Human), this protein is Wee1-like protein kinase 2 (WEE2).